The sequence spans 434 residues: D-amino acid dehydrogenase (434 aa).

3–17 (VVILGSGVVGVTSAW) provides a ligand contact to FAD.

The protein belongs to the DadA oxidoreductase family. It depends on FAD as a cofactor.

It catalyses the reaction a D-alpha-amino acid + A + H2O = a 2-oxocarboxylate + AH2 + NH4(+). The protein operates within amino-acid degradation; D-alanine degradation; NH(3) and pyruvate from D-alanine: step 1/1. Functionally, oxidative deamination of D-amino acids. The sequence is that of D-amino acid dehydrogenase from Yersinia pseudotuberculosis serotype O:1b (strain IP 31758).